We begin with the raw amino-acid sequence, 196 residues long: Thymidylate kinase (196 aa).

Residue 7–14 coordinates ATP; that stretch reads GIDGSGKT.

Belongs to the thymidylate kinase family.

It carries out the reaction dTMP + ATP = dTDP + ADP. Phosphorylation of dTMP to form dTDP in both de novo and salvage pathways of dTTP synthesis. The polypeptide is Thymidylate kinase (Wolbachia pipientis wMel).